A 1018-amino-acid polypeptide reads, in one-letter code: Isoleucine--tRNA ligase (1018 aa).

The short motif at 43-53 (PYTTGRIHLGT) is the 'HIGH' region element. The short motif at 586–590 (KMSKS) is the 'KMSKS' region element. Position 589 (Lys589) interacts with ATP.

Belongs to the class-I aminoacyl-tRNA synthetase family. IleS type 2 subfamily. Monomer. The cofactor is Zn(2+).

Its subcellular location is the cytoplasm. It catalyses the reaction tRNA(Ile) + L-isoleucine + ATP = L-isoleucyl-tRNA(Ile) + AMP + diphosphate. Functionally, catalyzes the attachment of isoleucine to tRNA(Ile). As IleRS can inadvertently accommodate and process structurally similar amino acids such as valine, to avoid such errors it has two additional distinct tRNA(Ile)-dependent editing activities. One activity is designated as 'pretransfer' editing and involves the hydrolysis of activated Val-AMP. The other activity is designated 'posttransfer' editing and involves deacylation of mischarged Val-tRNA(Ile). This Archaeoglobus fulgidus (strain ATCC 49558 / DSM 4304 / JCM 9628 / NBRC 100126 / VC-16) protein is Isoleucine--tRNA ligase.